The primary structure comprises 338 residues: Malate dehydrogenase, mitochondrial (338 aa).

The N-terminal 24 residues, 1-24, are a transit peptide targeting the mitochondrion; the sequence is MLSALARPAGAALRRSFSTSAQNN. NAD(+)-binding positions include 31–37 and D57; that span reads GASGGIG. An O-linked (GalNAc...) serine glycan is attached at S33. Residues K78 and K91 each carry the N6-acetyllysine; alternate modification. N6-succinyllysine; alternate is present on residues K78 and K91. R104 and R110 together coordinate substrate. Residues N117 and 140 to 142 each bind NAD(+); that span reads ISN. N142 lines the substrate pocket. K165 is modified (N6-acetyllysine). The Proton relay role is filled by D173. R176 is a substrate binding site. K185 is modified (N6-acetyllysine; alternate). K185 is modified (N6-succinyllysine; alternate). Residue H200 is the Proton acceptor of the active site. K203 is subject to N6-succinyllysine. 2 positions are modified to N6-acetyllysine; alternate: K215 and K239. K215 and K239 each carry N6-succinyllysine; alternate. K239 bears the N6-malonyllysine; alternate mark. At S246 the chain carries Phosphoserine. An NAD(+)-binding site is contributed by M251. At K269 the chain carries N6-succinyllysine. N6-acetyllysine; alternate is present on residues K296, K301, K307, K314, and K324. K296, K301, K307, K314, and K324 each carry N6-succinyllysine; alternate. Position 307 is an N6-malonyllysine; alternate (K307). S326 carries the post-translational modification Phosphoserine. N6-acetyllysine; alternate is present on residues K328, K329, and K335. K328 carries the N6-succinyllysine; alternate modification. The residue at position 329 (K329) is an N6-malonyllysine; alternate. K335 carries the N6-succinyllysine; alternate modification.

Belongs to the LDH/MDH superfamily. MDH type 1 family. Homodimer. Acetylation is enhanced after treatment either with trichostin A (TSA) or with nicotinamide (NAM) with the appearance of tri- and tetraacetylations. Glucose also increases acetylation. Ubiquitously expressed. Highly expressed in skeletal muscle and heart. Also expressed in liver, ileum, colon, kidney and adipose tissue, and at very low levels in lung, pancreas, stomach and spleen.

Its subcellular location is the mitochondrion matrix. It carries out the reaction (S)-malate + NAD(+) = oxaloacetate + NADH + H(+). Enzyme activity is enhanced by acetylation. In Felis catus (Cat), this protein is Malate dehydrogenase, mitochondrial.